The sequence spans 318 residues: Deoxyhypusine hydroxylase (318 aa).

Fe cation contacts are provided by His-65, Glu-66, His-98, and Glu-99. HEAT-like PBS-type repeat units follow at residues Val-96 to Glu-122, Tyr-194 to Asp-220, Phe-225 to Asn-251, and Val-258 to Asp-284. Fe cation-binding residues include His-227, Glu-228, His-260, and Glu-261.

This sequence belongs to the deoxyhypusine hydroxylase family. The cofactor is Fe(2+).

Its subcellular location is the cytoplasm. The protein localises to the nucleus. It carries out the reaction [eIF5A protein]-deoxyhypusine + AH2 + O2 = [eIF5A protein]-hypusine + A + H2O. The protein operates within protein modification; eIF5A hypusination. Functionally, catalyzes the hydroxylation of the N(6)-(4-aminobutyl)-L-lysine intermediate to form hypusine, an essential post-translational modification only found in mature eIF-5A factor. The polypeptide is Deoxyhypusine hydroxylase (lia1) (Schizosaccharomyces pombe (strain 972 / ATCC 24843) (Fission yeast)).